We begin with the raw amino-acid sequence, 462 residues long: Argininosuccinate lyase (462 aa).

This sequence belongs to the lyase 1 family. Argininosuccinate lyase subfamily.

The protein resides in the cytoplasm. The enzyme catalyses 2-(N(omega)-L-arginino)succinate = fumarate + L-arginine. It functions in the pathway amino-acid biosynthesis; L-arginine biosynthesis; L-arginine from L-ornithine and carbamoyl phosphate: step 3/3. The chain is Argininosuccinate lyase from Bacillus cereus (strain ZK / E33L).